Consider the following 469-residue polypeptide: Programmed cell death protein 4 (469 aa).

Met-1 carries the N-acetylmethionine modification. 2 disordered regions span residues 1–38 (MDVENEQILNVNPADPDNLSDSLFSGDEENAGTEEIKN) and 58–128 (KAKR…GTPG). Position 25 is a phosphoserine (Ser-25). Residues 58–64 (KAKRRLR) carry the Nuclear localization signal motif. Ser-67 bears the Phosphoserine; by PKB and RPS6KB1 mark. A phosphoserine mark is found at Ser-68, Ser-71, Ser-76, Ser-78, Ser-80, and Ser-94. Positions 70–76 (DSGRGDS) match the Phosphodegron motif. Low complexity predominate over residues 74–83 (GDSVSDSGSD). The segment covering 114 to 125 (KKGGAGGKGVWG) has biased composition (gly residues). At Tyr-152 the chain carries Phosphotyrosine. The region spanning 163–284 (AFEKTLTPII…CNTYIDSYKG (122 aa)) is the MI 1 domain. A Nuclear localization signal motif is present at residues 241 to 250 (DKLLKDLPEL). A phosphoserine mark is found at Ser-313 and Ser-317. An MI 2 domain is found at 326-449 (HLVKEIDMLL…SKQLRDLCPS (124 aa)). Ser-457 carries the post-translational modification Phosphoserine; by PKB.

The protein belongs to the PDCD4 family. Interacts (via MI domains) with EIF4A2. Interacts (via MI domains) with EIF4A1 (via N-terminal domain). Heterotrimer with EIF4A1; one molecule of PDCD4 binds two molecules of EIF4A1. Interacts with EIF4G1. May form a complex with EIF4A1 and EIF4G1. The interaction between PDCD4 and EIF4A1 interferes with the interaction between EIF4A1 and EIF4G. When phosphorylated, interacts with BTRC and FBXW11. Polyubiquitinated, leading to its proteasomal degradation. Rapidly degraded in response to mitogens. Phosphorylation of the phosphodegron promotes interaction with BTRC and proteasomal degradation. Post-translationally, phosphorylated at Ser-67 by RPS6KB1 in response to mitogens; phosphorylation promotes proteasomal degradation of PDCD4. As to expression, up-regulated in proliferative cells. Highly expressed in epithelial cells of the mammary gland. Reduced expression in lung cancer and colon carcinoma.

The protein localises to the nucleus. The protein resides in the cytoplasm. Inhibits translation initiation and cap-dependent translation. May excert its function by hindering the interaction between EIF4A1 and EIF4G. Inhibits the helicase activity of EIF4A. Modulates the activation of JUN kinase. Down-regulates the expression of MAP4K1, thus inhibiting events important in driving invasion, namely, MAPK85 activation and consequent JUN-dependent transcription. May play a role in apoptosis. Tumor suppressor. Inhibits tumor promoter-induced neoplastic transformation. Binds RNA. The chain is Programmed cell death protein 4 (PDCD4) from Homo sapiens (Human).